The following is a 382-amino-acid chain: Histidinol-phosphate aminotransferase (382 aa).

Lys-215 bears the N6-(pyridoxal phosphate)lysine mark. The interval 363 to 382 (NIDNQSKTHSQTSSIRKGTI) is disordered.

This sequence belongs to the class-II pyridoxal-phosphate-dependent aminotransferase family. Histidinol-phosphate aminotransferase subfamily. Homodimer. Pyridoxal 5'-phosphate is required as a cofactor.

The enzyme catalyses L-histidinol phosphate + 2-oxoglutarate = 3-(imidazol-4-yl)-2-oxopropyl phosphate + L-glutamate. Its pathway is amino-acid biosynthesis; L-histidine biosynthesis; L-histidine from 5-phospho-alpha-D-ribose 1-diphosphate: step 7/9. This is Histidinol-phosphate aminotransferase from Yersinia pseudotuberculosis serotype O:1b (strain IP 31758).